Consider the following 612-residue polypeptide: Chaperone protein DnaK (612 aa).

Thr174 is subject to Phosphothreonine; by autocatalysis. The interval 578–612 (GGQTGGATNTDSAGQGTTQDNVYEANYKVEDDDNK) is disordered. Residues 586-598 (NTDSAGQGTTQDN) show a composition bias toward polar residues.

This sequence belongs to the heat shock protein 70 family.

Its function is as follows. Acts as a chaperone. The sequence is that of Chaperone protein DnaK from Thermoanaerobacter sp. (strain X514).